Consider the following 198-residue polypeptide: FMN-dependent NADH:quinone oxidoreductase (198 aa).

96–99 (MYNF) contributes to the FMN binding site.

It belongs to the azoreductase type 1 family. In terms of assembly, homodimer. FMN serves as cofactor.

It catalyses the reaction 2 a quinone + NADH + H(+) = 2 a 1,4-benzosemiquinone + NAD(+). The enzyme catalyses N,N-dimethyl-1,4-phenylenediamine + anthranilate + 2 NAD(+) = 2-(4-dimethylaminophenyl)diazenylbenzoate + 2 NADH + 2 H(+). In terms of biological role, quinone reductase that provides resistance to thiol-specific stress caused by electrophilic quinones. Its function is as follows. Also exhibits azoreductase activity. Catalyzes the reductive cleavage of the azo bond in aromatic azo compounds to the corresponding amines. This Burkholderia mallei (strain ATCC 23344) protein is FMN-dependent NADH:quinone oxidoreductase.